Reading from the N-terminus, the 684-residue chain is Methionine--tRNA ligase (684 aa).

The 'HIGH' region motif lies at proline 12–histidine 22. Zn(2+) contacts are provided by cysteine 143, cysteine 146, cysteine 156, and cysteine 159. A 'KMSKS' region motif is present at residues lysine 339–serine 343. Lysine 342 is a binding site for ATP. The tRNA-binding domain occupies aspartate 581 to glycine 684.

It belongs to the class-I aminoacyl-tRNA synthetase family. MetG type 1 subfamily. Homodimer. Zn(2+) is required as a cofactor.

It localises to the cytoplasm. The enzyme catalyses tRNA(Met) + L-methionine + ATP = L-methionyl-tRNA(Met) + AMP + diphosphate. Functionally, is required not only for elongation of protein synthesis but also for the initiation of all mRNA translation through initiator tRNA(fMet) aminoacylation. This chain is Methionine--tRNA ligase, found in Neisseria gonorrhoeae (strain ATCC 700825 / FA 1090).